A 145-amino-acid chain; its full sequence is Flagellar assembly factor FliW (145 aa).

The protein belongs to the FliW family. Interacts with translational regulator CsrA and flagellin(s).

It is found in the cytoplasm. Its function is as follows. Acts as an anti-CsrA protein, binds CsrA and prevents it from repressing translation of its target genes, one of which is flagellin. Binds to flagellin and participates in the assembly of the flagellum. The chain is Flagellar assembly factor FliW from Anoxybacillus flavithermus (strain DSM 21510 / WK1).